The sequence spans 159 residues: Cyclic pyranopterin monophosphate synthase (159 aa).

Residues 76–78 (LCH) and 114–115 (ME) contribute to the substrate site. Residue aspartate 129 is part of the active site.

The protein belongs to the MoaC family. Homohexamer; trimer of dimers.

The enzyme catalyses (8S)-3',8-cyclo-7,8-dihydroguanosine 5'-triphosphate = cyclic pyranopterin phosphate + diphosphate. It functions in the pathway cofactor biosynthesis; molybdopterin biosynthesis. Its function is as follows. Catalyzes the conversion of (8S)-3',8-cyclo-7,8-dihydroguanosine 5'-triphosphate to cyclic pyranopterin monophosphate (cPMP). This chain is Cyclic pyranopterin monophosphate synthase, found in Oleidesulfovibrio alaskensis (strain ATCC BAA-1058 / DSM 17464 / G20) (Desulfovibrio alaskensis).